The chain runs to 174 residues: MARKGAPKKRLLLPDPIYNKVSVHMLVNRILKNGKKSIAYRIVYSVFRKISETMNQNPVEVWEKALNNVKPRVEVKPRRRAGSIQQVPRVMPSAERARAIAIRWIVSACQKKAGKDMISKLFSEISEASNKNGAAFRKKEELHKMALSNLMNSRRPDKIVKAITEQSEINDDVY.

Belongs to the universal ribosomal protein uS7 family. In terms of assembly, part of the 30S ribosomal subunit.

The protein resides in the plastid. It localises to the chloroplast. In terms of biological role, one of the primary rRNA binding proteins, it binds directly to 16S rRNA where it nucleates assembly of the head domain of the 30S subunit. This chain is Small ribosomal subunit protein uS7c (rps7), found in Stigeoclonium helveticum (Green alga).